The following is a 322-amino-acid chain: Quinolinate synthase (322 aa).

Residues His-37 and Ser-54 each contribute to the iminosuccinate site. Residue Cys-99 participates in [4Fe-4S] cluster binding. Iminosuccinate contacts are provided by residues 125 to 127 (YIN) and Ser-142. Cys-185 serves as a coordination point for [4Fe-4S] cluster. Iminosuccinate-binding positions include 211-213 (HPE) and Thr-228. Position 278 (Cys-278) interacts with [4Fe-4S] cluster.

Belongs to the quinolinate synthase family. Type 2 subfamily. The cofactor is [4Fe-4S] cluster.

The protein resides in the cytoplasm. The catalysed reaction is iminosuccinate + dihydroxyacetone phosphate = quinolinate + phosphate + 2 H2O + H(+). Its pathway is cofactor biosynthesis; NAD(+) biosynthesis; quinolinate from iminoaspartate: step 1/1. Functionally, catalyzes the condensation of iminoaspartate with dihydroxyacetone phosphate to form quinolinate. The protein is Quinolinate synthase of Prosthecochloris aestuarii (strain DSM 271 / SK 413).